Reading from the N-terminus, the 460-residue chain is Cation efflux system protein CusC (460 aa).

An N-terminal signal peptide occupies residues 1–17; the sequence is MSPCKLLPFCVALALTG. The N-palmitoyl cysteine moiety is linked to residue C18. The S-diacylglycerol cysteine moiety is linked to residue C18.

It belongs to the outer membrane factor (OMF) (TC 1.B.17) family. As to quaternary structure, homotrimer. Component of the cus efflux system composed of CusA, CusB, CusC and CusF.

It is found in the cell outer membrane. Forms pores that allow passive diffusion of cations across the outer membrane. Part of a cation efflux system that mediates resistance to copper and silver. This is Cation efflux system protein CusC (cusC) from Escherichia coli O157:H7.